A 145-amino-acid chain; its full sequence is Angiogenin-3 (145 aa).

Residues 1–24 (MVMSPGSLLLVFLLSLDVIPPTLA) form the signal peptide. Pyrrolidone carboxylic acid is present on Gln25. The Proton acceptor role is filled by His37. 3 cysteine pairs are disulfide-bonded: Cys50–Cys104, Cys63–Cys115, and Cys81–Cys130. The short motif at 55 to 59 (KKRKL) is the Nucleolar localization signal element. The Zn(2+) site is built by Glu65 and His106. The active-site Proton donor is the His137.

This sequence belongs to the pancreatic ribonuclease family.

It localises to the cytoplasmic vesicle. It is found in the secretory vesicle lumen. Its subcellular location is the secreted. The protein resides in the nucleus. The protein localises to the nucleolus. Its activity is regulated as follows. Divalent metal ions, such as Cu2+ and Zn2+, may inhibit the ribonucleolytic activity. Functionally, has low ribonuclease activity (in vitro). This is Angiogenin-3 (Ang3) from Mus musculus (Mouse).